The sequence spans 417 residues: Phosphoglycerate kinase (417 aa).

The (2R)-3-phosphoglycerate site is built by V23, D24, F25, N26, Q39, R40, S63, H64, G66, R67, L122, R123, H170, and R171. A Phosphoserine modification is found at S203. Position 214 (G214) interacts with ADP. Residue G214 participates in CDP binding. 2 residues coordinate AMP: A215 and K216. Residue A215 coordinates ATP. A215 provides a ligand contact to Mg(2+). D219 contacts CDP. Residue D219 coordinates Mg(2+). AMP is bound at residue K220. K220 is a binding site for ATP. G238 serves as a coordination point for ADP. G238 lines the CDP pocket. AMP contacts are provided by A239 and G313. Positions 239 and 313 each coordinate ATP. Residues G338 and F343 each contribute to the CDP site. F343 is a binding site for ADP. E344 is an AMP binding site. Residues E344, D375, and T376 each contribute to the ATP site. D375 is a Mg(2+) binding site.

The protein belongs to the phosphoglycerate kinase family. In terms of assembly, monomer. Requires Mg(2+) as cofactor. Dephosphorylated by PTC1 and PTC2 at Ser-203; the protein is cytosolic when dephosphorylated.

It localises to the cytoplasm. The protein resides in the cytosol. Its subcellular location is the mitochondrion. The catalysed reaction is (2R)-3-phosphoglycerate + ATP = (2R)-3-phospho-glyceroyl phosphate + ADP. Its pathway is carbohydrate degradation; glycolysis; pyruvate from D-glyceraldehyde 3-phosphate: step 2/5. In terms of biological role, catalyzes one of the two ATP producing reactions in the glycolytic pathway via the reversible conversion of 1,3-diphosphoglycerate to 3-phosphoglycerate. Both L- and D- forms of purine and pyrimidine nucleotides can be used as substrates, but the activity is much lower on pyrimidines. Negatively regulates the biosynthesis of acetyl-CoA from pyruvate in the mitochondrion and consequently also attenuates aflatoxin production. This chain is Phosphoglycerate kinase, found in Aspergillus flavus (strain ATCC 200026 / FGSC A1120 / IAM 13836 / NRRL 3357 / JCM 12722 / SRRC 167).